The sequence spans 627 residues: Asparagine synthetase domain-containing protein 1 (627 aa).

Cysteine 2 acts as the For GATase activity in catalysis. The 183-residue stretch at cysteine 2–asparagine 184 folds into the Glutamine amidotransferase type-2 domain. The Asparagine synthetase domain occupies alanine 308–lysine 597. Residues glutamine 373 to threonine 404 are disordered.

The polypeptide is Asparagine synthetase domain-containing protein 1 (Asnsd1) (Mus musculus (Mouse)).